The following is a 381-amino-acid chain: L-lactate dehydrogenase (381 aa).

The FMN hydroxy acid dehydrogenase domain occupies 1 to 380 (MIISASTDYR…NRDSLAVSER (380 aa)). Tyr24 serves as a coordination point for substrate. The FMN site is built by Ser106 and Gln127. Position 129 (Tyr129) interacts with substrate. Residue Thr155 coordinates FMN. Arg164 is a binding site for substrate. Lys251 is a binding site for FMN. Catalysis depends on His275, which acts as the Proton acceptor. A substrate-binding site is contributed by Arg278. 306-330 (DSGIRTGLDVVRMIALGADSVLLGR) is an FMN binding site.

It belongs to the FMN-dependent alpha-hydroxy acid dehydrogenase family. It depends on FMN as a cofactor.

Its subcellular location is the cell inner membrane. The catalysed reaction is (S)-lactate + A = pyruvate + AH2. Functionally, catalyzes the conversion of L-lactate to pyruvate. Is coupled to the respiratory chain. This is L-lactate dehydrogenase from Yersinia pseudotuberculosis serotype O:1b (strain IP 31758).